Here is a 205-residue protein sequence, read N- to C-terminus: Basigin (205 aa).

The N-terminal stretch at 1–18 (MAAALFVLLGFALLGTHG) is a signal peptide. Residues 19–103 (ASGAAGTVFT…MGTANIQLHG (85 aa)) enclose the Ig-like C2-type domain. Over 19–205 (ASGAAGTVFT…AIITLRVRSH (187 aa)) the chain is Extracellular. Intrachain disulfides connect Cys-41–Cys-87 and Cys-126–Cys-185. Residues Asn-44, Asn-152, and Asn-186 are each glycosylated (N-linked (GlcNAc...) asparagine). Residues 105-199 (PRVKAVKSSE…SKGSDQAIIT (95 aa)) enclose the Ig-like V-type domain.

In terms of assembly, homooligomer. Interacts with VEGFA, KDR/VEGFR2, PPIA/CYPA, SLC16A12, SLC16A11, ATP1B2, MAG, L1CAM and AJAP1. Interacts with SLC16A1; interaction mediates SLC16A1 targeting to the plasma membrane. Interacts with SLC16A3; interaction mediates SLC16A3 targeting to the plasma membrane. Interacts with PPIL2; regulates BSG transport to the cell membrane. Interacts with XKR8; promoting its localization at the cell membrane. Interacts with SLC16A6; this interaction mediates targeting to the plasma membrane.

Its subcellular location is the cell membrane. It localises to the endoplasmic reticulum membrane. It is found in the basolateral cell membrane. Signaling receptor for cyclophilins, essential for PPIA/CYPA and PPIB/CYPB-dependent signaling related to chemotaxis and adhesion of immune cells. Plays an important role in targeting the monocarboxylate transporters SLC16A1/GLUT1, SLC16A3, SLC16A8, SLC16A11 and SLC16A12 to the plasma membrane. Acts as a coreceptor for vascular endothelial growth factor receptor 2 (KDR/VEGFR2) in endothelial cells enhancing its VEGFA-mediated activation and downstream signaling. Promotes angiogenesis through EPAS1/HIF2A-mediated up-regulation of VEGFA and KDR/VEGFR2 in endothelial cells. This chain is Basigin (BSG), found in Bos taurus (Bovine).